The following is a 493-amino-acid chain: Insulinoma-associated protein 2 (493 aa).

Residues 1 to 12 (MPRGFLVKRTKR) are compositionally biased toward basic residues. An SNAG domain region spans residues 1 to 20 (MPRGFLVKRTKRSGSSYRAR). The segment at 1-77 (MPRGFLVKRT…PGPSPARPAG (77 aa)) is disordered. The C2H2-type 1; atypical zinc-finger motif lies at 203 to 223 (FICQLCKHQYADPFALAQHRC). The C2H2-type 2 zinc-finger motif lies at 231-253 (YRCPECDKVFSCPANLASHRRWH). The tract at residues 248–310 (SHRRWHKPRP…SGDGQHRDSA (63 aa)) is disordered. A compositionally biased stretch (pro residues) spans 267–276 (PHAPLTPPDP). The segment covering 283 to 294 (ENGRVPRTDDQH) has biased composition (basic and acidic residues). 3 consecutive C2H2-type zinc fingers follow at residues 354-376 (FVCPYCHKKFRRQAYLRKHLGTH), 398-420 (FACPLCGAHFPSADIREKHRLWH), and 452-475 (FSCKYCPSTFFSSPGLTRHINKCH).

In terms of tissue distribution, expressed in spleen, stomach, liver, kidney and testis. In the pancreas, expressed in islet cells, including insulin-producing beta-cells, but not in acinar cells (at protein level). In the brain, expressed in the neuronal cells of the cerebral cortex, the Purkinje cells of the cerebellum and the hippocampal region including CA1 and CA3 (at protein level).

It localises to the cytoplasm. Its subcellular location is the nucleus. Its function is as follows. May function as a growth suppressor or tumor suppressor in liver cells and in certain neurons. The chain is Insulinoma-associated protein 2 (Insm2) from Mus musculus (Mouse).